The chain runs to 1940 residues: Protein ORF1940 (1940 aa).

4 TPR repeats span residues Ile-119–Tyr-153, Phe-155–Ile-186, Arg-480–Gly-513, and Gly-617–Ser-652. Disordered regions lie at residues Pro-1160–Val-1239 and Lys-1519–Ser-1571. Residues Gln-1164 to Ser-1185 are compositionally biased toward low complexity. A compositionally biased stretch (polar residues) spans Leu-1186–Lys-1200. 3 stretches are compositionally biased toward low complexity: residues Val-1201 to Leu-1235, Pro-1521 to Pro-1539, and Thr-1561 to Ser-1571. The TPR 5 repeat unit spans residues Lys-1691–Asn-1724. Residues Thr-1862–Ile-1940 are disordered. Over residues Thr-1868 to Lys-1883 the composition is skewed to pro residues. The span at Thr-1884 to Thr-1894 shows a compositional bias: low complexity. A compositionally biased stretch (pro residues) spans Pro-1895–Pro-1912.

The protein is Protein ORF1940 of Acidianus convivator (ATV).